A 465-amino-acid chain; its full sequence is MFTRVANFCRKVLSREESEAEQAVARPHMTIIPREQHAISRKDISENALKVLYRLNKAGYEAYLVGGGVRDLLLGKKPKDFDVTTNATPDQVRKLFRNCRLVGRRFRLAHVMFGPEIIEVATFRGHHEGSESDRTTSQRGQNGMLLRDNIFGSIEEDAQRRDFTINSLYYSVADFTVRDYVGGMQDLQEGVIRLIGNPETRYREDPVRMLRAVRFAAKLNMHISPETAEPIPRLATLLNDIPPARLFEESLKLLQAGNGYETYQQLREYHLFQPLFPTITRYFTENGDSAMERIIAQVLKNTDNRIRNEMRVNPAFLFAAMFWYPLLEMAQKIAQESGLAYYDAFALAMNDVLDEACRSLAIPKRLTTLTRDIWQLQLRMSRRQGKRAWKLMEHPKFRAAFDLLELRAQVENNTELQRLAQWWAEFQASAPPEQKGMLNELDDDPAPRRRRSRPRKRAPRREGTV.

Active-site residues include Asp80, Asp82, and Asp162. A disordered region spans residues 430 to 465 (APPEQKGMLNELDDDPAPRRRRSRPRKRAPRREGTV). Residues 448–459 (RRRRSRPRKRAP) are compositionally biased toward basic residues.

This sequence belongs to the tRNA nucleotidyltransferase/poly(A) polymerase family.

It catalyses the reaction RNA(n) + ATP = RNA(n)-3'-adenine ribonucleotide + diphosphate. Functionally, adds poly(A) tail to the 3' end of many RNAs, which usually targets these RNAs for decay. Plays a significant role in the global control of gene expression, through influencing the rate of transcript degradation, and in the general RNA quality control. The protein is Poly(A) polymerase I of Salmonella typhimurium (strain LT2 / SGSC1412 / ATCC 700720).